The primary structure comprises 1830 residues: Dedicator of cytokinesis protein 2 (1830 aa).

The region spanning 8 to 69 (DKERHGVAIY…PKSFIHIKEV (62 aa)) is the SH3 domain. Residue K304 is modified to N6-acetyllysine. In terms of domain architecture, C2 DOCK-type spans 423–607 (RNDIYITLLQ…DVFSISTLVC (185 aa)). S588 and S593 each carry phosphoserine. K738 carries the post-translational modification N6-acetyllysine. Residues 939-1476 (CMTAILNQMG…TSFVTAYKLP (538 aa)) form an interaction with CRKL region. Positions 1211-1622 (YKDNNREEMY…VEKEYGVREM (412 aa)) constitute a DOCKER domain. Polar residues predominate over residues 1651–1665 (MNSDCSTPSKPTSES). The segment at 1651 to 1704 (MNSDCSTPSKPTSESFDLELASPKTPRVEQEEPISPGSTLPEVKLRRSKKRTKR) is disordered. Residues S1685, S1706, S1731, and S1784 each carry the phosphoserine modification.

This sequence belongs to the DOCK family. Homodimer. Interacts with RAC1 and RAC2. Interacts with CRKL and VAV. Interacts with CD3Z. In terms of tissue distribution, specifically expressed in hematopoietic cells. Highly expressed in peripheral blood leukocytes, and expressed at intermediate level in thymus and spleen. Expressed at very low level in the small intestine and colon.

The protein resides in the endomembrane system. Its subcellular location is the cytoplasm. It is found in the cytoskeleton. Involved in cytoskeletal rearrangements required for lymphocyte migration in response of chemokines. Activates RAC1 and RAC2, but not CDC42, by functioning as a guanine nucleotide exchange factor (GEF), which exchanges bound GDP for free GTP. May also participate in IL2 transcriptional activation via the activation of RAC2. This Homo sapiens (Human) protein is Dedicator of cytokinesis protein 2 (DOCK2).